Consider the following 147-residue polypeptide: Lysozyme C-3 (147 aa).

An N-terminal signal peptide occupies residues 1 to 18; it reads MKALIILGFLFLSVAVQG. Positions 19 to 147 constitute a C-type lysozyme domain; the sequence is KVFERCELAR…VSSYVQGCTL (129 aa). 4 disulfides stabilise this stretch: Cys24–Cys145, Cys48–Cys133, Cys83–Cys99, and Cys95–Cys113. Catalysis depends on residues Glu53 and Asp71.

This sequence belongs to the glycosyl hydrolase 22 family. As to quaternary structure, monomer. Stomach-specific.

It carries out the reaction Hydrolysis of (1-&gt;4)-beta-linkages between N-acetylmuramic acid and N-acetyl-D-glucosamine residues in a peptidoglycan and between N-acetyl-D-glucosamine residues in chitodextrins.. Its function is as follows. Lysozymes have primarily a bacteriolytic function; those in tissues and body fluids are associated with the monocyte-macrophage system and enhance the activity of immunoagents. The protein is Lysozyme C-3 (LYZ3) of Bos taurus (Bovine).